Reading from the N-terminus, the 640-residue chain is MSDLNDVQENAKLNSETRNTGKAEPPHGTTEYVAEAEISKNGVGSPKKSPKKGKVGKGDNNKVETELVHTALLEKDNPFMEEGPTGFTKSALLEIPGMRSHNLKNPNEDYEDDSEGLLPLNQESNAETCRTSLSGSINSMNGETSASEEPSVSNRKKSARIHILEAKRVSEGQGRAYIAYVIQFENSTVQRRYSDFESLRSILIRLFPMTLIPPIPEKQSIKNYGKSITGSSSKYLLPSEGSGSVDLSLSVIHASVNNSDEKLIRHRIRMLTEFLNKLLTNEEITKTSIITDFLDPNNHNWHEFVNSSSTFSSLPKSILQCNPLDPTNTTRIHAMLPIPGSSSQLLLNKESNDKKMDKERSKSFTNIEQDYKQYENLLDNGIYKYNRRTTKTYHDLKSDYNEIGEVFAQFAHEQAQVGELAEQLSYLSNAFSGSSISLEKLVGRLYYNINEPLNESVHMATSARELIKYRKLKYLQNEMIKKSLNSKRAQLEKLEAQNNEYKDVDKIIDNEMSKSHTINLERPNNNTGSGGKSYGGKLFNGFNKLASMVKDSVKYQETDPHTASINLKKEIEQLSESLEVTENDLEVISKVIKNDQLPKFSKEREVDLSEILKHYSRYMRNYARQNLEIWKEVKRHQDFA.

Composition is skewed to polar residues over residues 1–18 (MSDL…SETR) and 126–153 (AETC…PSVS). Disordered stretches follow at residues 1 to 63 (MSDL…NNKV) and 126 to 156 (AETC…SNRK). The residue at position 2 (Ser2) is an N-acetylserine. The region spanning 140–301 (MNGETSASEE…DFLDPNNHNW (162 aa)) is the PX domain. A 1,2-diacyl-sn-glycero-3-phospho-(1D-myo-inositol-3-phosphate)-binding residues include Arg192, Ser194, Lys218, and Arg267. 2 positions are modified to phosphoserine: Ser361 and Ser363. Coiled coils occupy residues 475–512 (LQNE…DNEM) and 562–593 (TASI…KVIK).

The protein belongs to the sorting nexin family. In terms of assembly, forms a complex with SNX4 and ATG17.

It is found in the endosome membrane. The protein resides in the preautophagosomal structure membrane. In terms of biological role, required for cytoplasm to vacuole transport (Cvt), pexophagy and mitophagy. Also involved in endoplasmic reticulum-specific autophagic process and is essential for the survival of cells subjected to severe ER stress. Functions in protein retrieval from the endocytic pathway. Required for proper sorting of the v-SNARE protein SNC1. The polypeptide is Autophagy-related protein 20 (ATG20) (Saccharomyces cerevisiae (strain ATCC 204508 / S288c) (Baker's yeast)).